Consider the following 420-residue polypeptide: Glutamate dehydrogenase (420 aa).

Residue lysine 105 is part of the active site. An NAD(+)-binding site is contributed by 220-226 (GYGNAGY).

The protein belongs to the Glu/Leu/Phe/Val dehydrogenases family. In terms of assembly, homohexamer.

It localises to the cytoplasm. It catalyses the reaction L-glutamate + NAD(+) + H2O = 2-oxoglutarate + NH4(+) + NADH + H(+). It carries out the reaction L-glutamate + NADP(+) + H2O = 2-oxoglutarate + NH4(+) + NADPH + H(+). The protein is Glutamate dehydrogenase (gdhA) of Pyrococcus furiosus (strain ATCC 43587 / DSM 3638 / JCM 8422 / Vc1).